We begin with the raw amino-acid sequence, 371 residues long: Probable endolytic peptidoglycan transglycosylase RlpA (371 aa).

The first 25 residues, 1 to 25, serve as a signal peptide directing secretion; it reads MNQRHLWTIVALSVTVLGTPAVGRT. Low complexity predominate over residues 177–191; sequence LVASQSQNKSSSSQQ. The tract at residues 177–196 is disordered; that stretch reads LVASQSQNKSSSSQQKSERY.

It belongs to the RlpA family.

Functionally, lytic transglycosylase with a strong preference for naked glycan strands that lack stem peptides. The sequence is that of Probable endolytic peptidoglycan transglycosylase RlpA from Nostoc sp. (strain PCC 7120 / SAG 25.82 / UTEX 2576).